We begin with the raw amino-acid sequence, 548 residues long: MVNIRVQKAPESPRTMEVGEIDTRAPFQSVKAAVSLFGEVAVSKQRSTPRRSRLSSESVCDKETQLMLVHKEFMKIKQKLDNAESTRSRALDDLSKAKKTMEDLSNKLETVNKSKQSAIDTKETVQQREEQLEHDKCHGSPPHHHELDVAREQYISTTVELDAAKQQLNKIRQSFDSAMDFKATALNQAAEAQRALQVNSAKVNELSKEISDMKDAIHQLKLAAAQNLQEHANIVKEKDDLRECYRTAVEEAEKKLLVLRKEYEPELSRTLEAKLLETTSEIEVLREEMKKAHESEMNTVKIITNELNEATMRLQEAADDECSLRSLVNSLRMELEDLRREREELQQKEAERLEIEETKKLEALKQESLKLEQMKTEAIEARNEAANMNRKIESLKKETEAAMIAAEEAEKRLELVIREVEEAKSAEEKVREEMKMISQKQESKKQDEESSGSKIKITIQEFESLKRGAGETEAAIEKKLATIAAELEEINKRRAEADNKLEANLKAIEEMKQATELAQKSAESAEAAKRMVESELQRWRQQENVQLA.

Residues 71–544 (KEFMKIKQKL…ELQRWRQQEN (474 aa)) adopt a coiled-coil conformation. A compositionally biased stretch (basic and acidic residues) spans 430-448 (VREEMKMISQKQESKKQDE). The segment at 430-455 (VREEMKMISQKQESKKQDEESSGSKI) is disordered.

This sequence belongs to the WEB family.

The protein is WEB family protein At1g12150 of Arabidopsis thaliana (Mouse-ear cress).